We begin with the raw amino-acid sequence, 413 residues long: Putative competence-damage inducible protein (413 aa).

Belongs to the CinA family.

This Desulforudis audaxviator (strain MP104C) protein is Putative competence-damage inducible protein.